The primary structure comprises 436 residues: Sulfopropanediol 3-dehydrogenase (436 aa).

Positions 118, 180, and 203 each coordinate NAD(+). Q248 and H251 together coordinate Zn(2+). Catalysis depends on proton acceptor residues E318 and H319. Zn(2+) contacts are provided by D352 and H411.

This sequence belongs to the histidinol dehydrogenase family. HpsN subfamily. Requires Zn(2+) as cofactor.

It catalyses the reaction (2R)-3-sulfopropanediol + 2 NAD(+) + H2O = (2R)-3-sulfolactate + 2 NADH + 3 H(+). In terms of biological role, catalyzes the NAD-dependent oxidation of (R)-2,3-dihydroxypropane-1-sulfonate to (R)-3-sulfolactate. This chain is Sulfopropanediol 3-dehydrogenase, found in Cupriavidus pinatubonensis (strain JMP 134 / LMG 1197) (Cupriavidus necator (strain JMP 134)).